The primary structure comprises 487 residues: Transcriptional adapter ADA2b (487 aa).

The segment covering 1–13 (MGRSRGNFQNFED) has biased composition (polar residues). The segment at 1–25 (MGRSRGNFQNFEDPTQRTRKKKNAA) is disordered. The segment at 42–98 (GGKYNCDYCQKDITGKIRIKCAVCPDFDLCIECMSVGAEITPHKCDHPYRVMGNLTF) adopts a ZZ-type zinc-finger fold. The Zn(2+) site is built by cysteine 47, cysteine 50, cysteine 62, cysteine 65, cysteine 71, cysteine 74, histidine 84, and histidine 88. Positions 100 to 152 (LICPDWSADDEMLLLEGLEIYGLGNWAEVAEHVGTKSKEQCLEHYRNIYLNSP) constitute an SANT domain. Lysine 216 is modified (N6-acetyllysine; by GCN5). Basic and acidic residues predominate over residues 368–383 (RKRKRENEEGMNRGKE). The tract at residues 368–388 (RKRKRENEEGMNRGKESGQFG) is disordered. Positions 401–487 (QASSSYVNDL…MLVKKGIAQL (87 aa)) constitute an SWIRM domain.

In terms of assembly, interacts in vitro with the HAT domain of GCN5 and with the DNA-binding domain of the transcriptional activator DREB1B/CBF1. Interacts with BZIP11. Post-translationally, acetylated in vitro by GCN5, but acetylation is not essential for biological activity. In terms of tissue distribution, expressed in roots, leaves, stems, flowers and siliques, with the strongest activity in the meristematic zones.

Its subcellular location is the nucleus. Its function is as follows. Required for the function of some acidic activation domains, which activate transcription from a distant site. The exact mechanism of action is not yet known. ADA2 stimulates the acetyltransferase activity of GCN5 on free histones or nucleosomes, probably by opening up the promoter region. Mediates auxin and cytokinin signals in the control of cell proliferation and might be involved in repression of a freezing tolerance pathway at warm temperature. Involved in the positive regulation of salt-induced gene expression by maintaining locus-specific acetylation of histones H4 and H3. The protein is Transcriptional adapter ADA2b (ADA2B) of Arabidopsis thaliana (Mouse-ear cress).